Consider the following 337-residue polypeptide: Transaldolase (337 aa).

A Nuclear localization signal motif is present at residues 1–10 (MSGSPVKRQR). Residue Lys115 is modified to N6-acetyllysine. Lys142 (schiff-base intermediate with substrate) is an active-site residue. N6-acetyllysine is present on Lys219. 2 positions are modified to phosphoserine: Ser237 and Ser256. An N6-acetyllysine mark is found at Lys269, Lys286, and Lys321.

This sequence belongs to the transaldolase family. Type 1 subfamily. As to quaternary structure, homodimer. Interacts with KPNA1 and KPNA4.

The protein localises to the nucleus. Its subcellular location is the cytoplasm. It carries out the reaction D-sedoheptulose 7-phosphate + D-glyceraldehyde 3-phosphate = D-erythrose 4-phosphate + beta-D-fructose 6-phosphate. The protein operates within carbohydrate degradation; pentose phosphate pathway; D-glyceraldehyde 3-phosphate and beta-D-fructose 6-phosphate from D-ribose 5-phosphate and D-xylulose 5-phosphate (non-oxidative stage): step 2/3. Its function is as follows. Catalyzes the rate-limiting step of the non-oxidative phase in the pentose phosphate pathway. Catalyzes the reversible conversion of sedheptulose-7-phosphate and D-glyceraldehyde 3-phosphate into erythrose-4-phosphate and beta-D-fructose 6-phosphate. This Cricetulus griseus (Chinese hamster) protein is Transaldolase (TALDO1).